Reading from the N-terminus, the 210-residue chain is Ribosomal RNA large subunit methyltransferase E (210 aa).

Residues Gly-64, Trp-66, Asp-84, Asp-100, and Asp-125 each contribute to the S-adenosyl-L-methionine site. The Proton acceptor role is filled by Lys-165.

Belongs to the class I-like SAM-binding methyltransferase superfamily. RNA methyltransferase RlmE family.

Its subcellular location is the cytoplasm. The catalysed reaction is uridine(2552) in 23S rRNA + S-adenosyl-L-methionine = 2'-O-methyluridine(2552) in 23S rRNA + S-adenosyl-L-homocysteine + H(+). Specifically methylates the uridine in position 2552 of 23S rRNA at the 2'-O position of the ribose in the fully assembled 50S ribosomal subunit. This Chromohalobacter salexigens (strain ATCC BAA-138 / DSM 3043 / CIP 106854 / NCIMB 13768 / 1H11) protein is Ribosomal RNA large subunit methyltransferase E.